The following is a 382-amino-acid chain: Mannitol-1-phosphate 5-dehydrogenase (382 aa).

3–14 serves as a coordination point for NAD(+); that stretch reads ALHFGAGNIGRG.

It belongs to the mannitol dehydrogenase family.

The catalysed reaction is D-mannitol 1-phosphate + NAD(+) = beta-D-fructose 6-phosphate + NADH + H(+). In Salmonella agona (strain SL483), this protein is Mannitol-1-phosphate 5-dehydrogenase.